Reading from the N-terminus, the 462-residue chain is uncharacterized protein (462 aa).

A TRAM domain is found at 12 to 70 (MLKKNDIIQVAISDLSHEGAGVAKHDGFVFFVDNALPEEVIDMRVLKVNKNSGFGKVEA). S-adenosyl-L-methionine-binding residues include Gln294, Tyr323, Glu344, and Asp392. The Nucleophile role is filled by Cys419.

It belongs to the class I-like SAM-binding methyltransferase superfamily. RNA M5U methyltransferase family.

This is an uncharacterized protein from Streptococcus pyogenes serotype M1.